The primary structure comprises 367 residues: Glutamate 5-kinase (367 aa).

Lys-9 contacts ATP. Residues Ser-49, Asp-136, and Asn-148 each coordinate substrate. ATP is bound by residues 168 to 169 and 210 to 216; these read TD and TGGMKSK. In terms of domain architecture, PUA spans 276 to 350; the sequence is SGQIEVDAGA…GMQSQDIQVR (75 aa).

Belongs to the glutamate 5-kinase family.

It localises to the cytoplasm. It catalyses the reaction L-glutamate + ATP = L-glutamyl 5-phosphate + ADP. It functions in the pathway amino-acid biosynthesis; L-proline biosynthesis; L-glutamate 5-semialdehyde from L-glutamate: step 1/2. Functionally, catalyzes the transfer of a phosphate group to glutamate to form L-glutamate 5-phosphate. In Bacillus cereus (strain ATCC 14579 / DSM 31 / CCUG 7414 / JCM 2152 / NBRC 15305 / NCIMB 9373 / NCTC 2599 / NRRL B-3711), this protein is Glutamate 5-kinase.